Reading from the N-terminus, the 578-residue chain is Zinc finger protein with KRAB and SCAN domains 8 (578 aa).

Residues 1–20 (MAEESRKPSAPSPPDQTPEE) form a disordered region. S12 is modified (phosphoserine). K26 participates in a covalent cross-link: Glycyl lysine isopeptide (Lys-Gly) (interchain with G-Cter in SUMO2). The SCAN box domain occupies 51–133 (RLRFRQLCYQ…TLLEDLERQI (83 aa)). Residues 158–205 (ASAPEPPNTQLQSEATQHKSPVPQESQERAMSTSQSPTRSQKGSSGDQ) form a disordered region. The segment covering 165–205 (NTQLQSEATQHKSPVPQESQERAMSTSQSPTRSQKGSSGDQ) has biased composition (polar residues). Glycyl lysine isopeptide (Lys-Gly) (interchain with G-Cter in SUMO2) cross-links involve residues K176 and K199. S201 is modified (phosphoserine). Residues 220 to 316 (EKIEDMAVSL…GRLERQRGNP (97 aa)) form the KRAB domain. Glycyl lysine isopeptide (Lys-Gly) (interchain with G-Cter in SUMO2) cross-links involve residues K221, K272, and K288. 2 consecutive C2H2-type zinc fingers follow at residues 322-344 (HKCD…WRIH) and 350-372 (YQCN…QDIH). Glycyl lysine isopeptide (Lys-Gly) (interchain with G-Cter in SUMO2) cross-links involve residues K374 and K376. C2H2-type zinc fingers lie at residues 378–400 (YHCK…QRIH), 406–428 (YQCN…QRIH), 434–456 (YECN…QRIH), 462–484 (YECD…QRSH), 490–512 (YKCN…QRIH), 518–540 (YKCK…LRIH), and 546–568 (YQCN…QRIH). Residues K413 and K441 each participate in a glycyl lysine isopeptide (Lys-Gly) (interchain with G-Cter in SUMO2) cross-link. A Glycyl lysine isopeptide (Lys-Gly) (interchain with G-Cter in SUMO2) cross-link involves residue K502. K572 is covalently cross-linked (Glycyl lysine isopeptide (Lys-Gly) (interchain with G-Cter in SUMO2)).

This sequence belongs to the krueppel C2H2-type zinc-finger protein family.

It is found in the nucleus. Its function is as follows. May be involved in transcriptional regulation. This Pan troglodytes (Chimpanzee) protein is Zinc finger protein with KRAB and SCAN domains 8 (ZKSCAN8).